The primary structure comprises 413 residues: Serine/threonine transporter SstT (413 aa).

9 helical membrane passes run Asn15 to Pro35, Phe48 to Ile68, Val82 to Phe102, Ala141 to Leu161, Cys178 to Val198, Leu216 to Val236, Ile290 to Leu310, Leu330 to Ile350, and Phe357 to Val377.

Belongs to the dicarboxylate/amino acid:cation symporter (DAACS) (TC 2.A.23) family.

Its subcellular location is the cell inner membrane. The catalysed reaction is L-serine(in) + Na(+)(in) = L-serine(out) + Na(+)(out). It carries out the reaction L-threonine(in) + Na(+)(in) = L-threonine(out) + Na(+)(out). Functionally, involved in the import of serine and threonine into the cell, with the concomitant import of sodium (symport system). The chain is Serine/threonine transporter SstT from Aliivibrio fischeri (strain ATCC 700601 / ES114) (Vibrio fischeri).